A 64-amino-acid polypeptide reads, in one-letter code: Prokaryotic ubiquitin-like protein Pup (64 aa).

The span at 1 to 11 (MAQEQTKRTGG) shows a compositional bias: basic and acidic residues. The segment at 1–38 (MAQEQTKRTGGGDEDDTPGGDGAAGQERREKLAEDTDD) is disordered. The tract at residues 21–58 (DGAAGQERREKLAEDTDDLLDEIDDVLEENAEDFVRAY) is ARC ATPase binding. Positions 24-52 (AGQERREKLAEDTDDLLDEIDDVLEENAE) form a coiled coil. Position 64 is a deamidated glutamine (Gln-64). Gln-64 is covalently cross-linked (Isoglutamyl lysine isopeptide (Gln-Lys) (interchain with K-? in acceptor proteins)).

It belongs to the prokaryotic ubiquitin-like protein family. In terms of assembly, strongly interacts with the proteasome-associated ATPase ARC through a hydrophobic interface; the interacting region of Pup lies in its C-terminal half. There is one Pup binding site per ARC hexamer ring. Is modified by deamidation of its C-terminal glutamine to glutamate by the deamidase Dop, a prerequisite to the subsequent pupylation process.

It functions in the pathway protein degradation; proteasomal Pup-dependent pathway. Protein modifier that is covalently attached to lysine residues of substrate proteins, thereby targeting them for proteasomal degradation. The tagging system is termed pupylation. The chain is Prokaryotic ubiquitin-like protein Pup from Rhodococcus opacus (strain B4).